An 89-amino-acid chain; its full sequence is Acylphosphatase (89 aa).

Positions 3 to 89 (CKRWILYGRV…GNYGSFHIEY (87 aa)) constitute an Acylphosphatase-like domain. Active-site residues include Arg18 and Asn36.

The protein belongs to the acylphosphatase family.

The enzyme catalyses an acyl phosphate + H2O = a carboxylate + phosphate + H(+). The sequence is that of Acylphosphatase (acyP) from Petrotoga mobilis (strain DSM 10674 / SJ95).